The sequence spans 689 residues: Glycine--tRNA ligase beta subunit (689 aa).

This sequence belongs to the class-II aminoacyl-tRNA synthetase family. Tetramer of two alpha and two beta subunits.

The protein resides in the cytoplasm. It catalyses the reaction tRNA(Gly) + glycine + ATP = glycyl-tRNA(Gly) + AMP + diphosphate. This is Glycine--tRNA ligase beta subunit from Mannheimia succiniciproducens (strain KCTC 0769BP / MBEL55E).